Here is a 566-residue protein sequence, read N- to C-terminus: Membrane protein insertase YidC (566 aa).

Residues 7–27 (ILIVALAIVSYVMVLKWNQDY) form a helical membrane-spanning segment. Residues 38 to 72 (ASSTTAPGLPDAPTGTSAANDDIPRAASDTTAPAE) are disordered. The next 5 helical transmembrane spans lie at 347 to 367 (LELT…FWLL), 373 to 393 (LVGN…GIFF), 443 to 463 (LGGC…YWVL), 474 to 494 (FMLW…PIIM), and 521 to 541 (PIIF…YWVV).

Belongs to the OXA1/ALB3/YidC family. Type 1 subfamily. As to quaternary structure, interacts with the Sec translocase complex via SecD. Specifically interacts with transmembrane segments of nascent integral membrane proteins during membrane integration.

The protein resides in the cell inner membrane. Functionally, required for the insertion and/or proper folding and/or complex formation of integral membrane proteins into the membrane. Involved in integration of membrane proteins that insert both dependently and independently of the Sec translocase complex, as well as at least some lipoproteins. Aids folding of multispanning membrane proteins. The chain is Membrane protein insertase YidC from Pseudomonas fluorescens (strain ATCC BAA-477 / NRRL B-23932 / Pf-5).